We begin with the raw amino-acid sequence, 211 residues long: Cell division protein SepF (211 aa).

Positions 15–26 are enriched in acidic residues; that stretch reads DTDEVNEVEEEV. The disordered stretch occupies residues 15–111; that stretch reads DTDEVNEVEE…ETYQAQTTVQ (97 aa). Polar residues-rich tracts occupy residues 44–57, 64–81, and 91–111; these read IPSQQTSRQSQNPA, ARSQQTESDSLPTYPNRQ, and RESVTASTARRETYQAQTTVQ.

It belongs to the SepF family. In terms of assembly, homodimer. Interacts with FtsZ.

It localises to the cytoplasm. In terms of biological role, cell division protein that is part of the divisome complex and is recruited early to the Z-ring. Probably stimulates Z-ring formation, perhaps through the cross-linking of FtsZ protofilaments. Its function overlaps with FtsA. This Streptococcus uberis (strain ATCC BAA-854 / 0140J) protein is Cell division protein SepF.